Reading from the N-terminus, the 1273-residue chain is Clustered mitochondria protein homolog (1273 aa).

The region spanning 344–599 (PANNADYSRM…NTYPLDVKFA (256 aa)) is the Clu domain. TPR repeat units follow at residues 981-1013 (SDQK…KEEV), 1022-1055 (AEKY…YERV), and 1151-1184 (ATLE…FTRE). Disordered regions lie at residues 1217–1242 (AEQA…KAEL) and 1254–1273 (IEGG…KGKK). Residues 1262–1273 (SKKKSSKKKGKK) show a composition bias toward basic residues.

It belongs to the CLU family. In terms of assembly, may associate with the eukaryotic translation initiation factor 3 (eIF-3) complex.

The protein resides in the cytoplasm. Its function is as follows. mRNA-binding protein involved in proper cytoplasmic distribution of mitochondria. This chain is Clustered mitochondria protein homolog, found in Vanderwaltozyma polyspora (strain ATCC 22028 / DSM 70294 / BCRC 21397 / CBS 2163 / NBRC 10782 / NRRL Y-8283 / UCD 57-17) (Kluyveromyces polysporus).